The sequence spans 110 residues: Large ribosomal subunit protein uL22 (110 aa).

It belongs to the universal ribosomal protein uL22 family. In terms of assembly, part of the 50S ribosomal subunit.

This protein binds specifically to 23S rRNA; its binding is stimulated by other ribosomal proteins, e.g. L4, L17, and L20. It is important during the early stages of 50S assembly. It makes multiple contacts with different domains of the 23S rRNA in the assembled 50S subunit and ribosome. Its function is as follows. The globular domain of the protein is located near the polypeptide exit tunnel on the outside of the subunit, while an extended beta-hairpin is found that lines the wall of the exit tunnel in the center of the 70S ribosome. This chain is Large ribosomal subunit protein uL22, found in Solidesulfovibrio magneticus (strain ATCC 700980 / DSM 13731 / RS-1) (Desulfovibrio magneticus).